Reading from the N-terminus, the 474-residue chain is Tryptophan biosynthesis protein TrpCF (474 aa).

The segment at 1–262 (MTSNNLPTVL…LAARELVYGP (262 aa)) is indole-3-glycerol phosphate synthase. The tract at residues 263 to 474 (NKVCGLTSPS…IFATISTFHY (212 aa)) is N-(5'-phosphoribosyl)anthranilate isomerase.

In the N-terminal section; belongs to the TrpC family. The protein in the C-terminal section; belongs to the TrpF family. Monomer.

It carries out the reaction N-(5-phospho-beta-D-ribosyl)anthranilate = 1-(2-carboxyphenylamino)-1-deoxy-D-ribulose 5-phosphate. The catalysed reaction is 1-(2-carboxyphenylamino)-1-deoxy-D-ribulose 5-phosphate + H(+) = (1S,2R)-1-C-(indol-3-yl)glycerol 3-phosphate + CO2 + H2O. Its pathway is amino-acid biosynthesis; L-tryptophan biosynthesis; L-tryptophan from chorismate: step 3/5. The protein operates within amino-acid biosynthesis; L-tryptophan biosynthesis; L-tryptophan from chorismate: step 4/5. Bifunctional enzyme that catalyzes two sequential steps of tryptophan biosynthetic pathway. The first reaction is catalyzed by the isomerase, coded by the TrpF domain; the second reaction is catalyzed by the synthase, coded by the TrpC domain. In Corynebacterium glutamicum (strain ATCC 13032 / DSM 20300 / JCM 1318 / BCRC 11384 / CCUG 27702 / LMG 3730 / NBRC 12168 / NCIMB 10025 / NRRL B-2784 / 534), this protein is Tryptophan biosynthesis protein TrpCF (trpC).